We begin with the raw amino-acid sequence, 509 residues long: Zinc finger protein Aiolos (509 aa).

The tract at residues 1–85 is disordered; that stretch reads MEDIKPNVEL…PMGNAEEPEI (85 aa). Positions 10-20 are enriched in polar residues; sequence LKSTQEQSVPT. Threonine 20 carries the phosphothreonine modification. Basic and acidic residues predominate over residues 56-72; that stretch reads DSMKVKDEYSERDENVL. Glycyl lysine isopeptide (Lys-Gly) (interchain with G-Cter in SUMO2) cross-links involve residues lysine 61, lysine 73, and lysine 100. 3 consecutive C2H2-type zinc fingers follow at residues 118-140, 146-168, and 174-196; these read MNCDVCGLSCISFNVLMVHKRSH, FQCNQCGASFTQKGNLLRHIKLH, and FKCHLCNYACQRRDALTGHLRTH. The segment at 202–224 adopts a C2H2-type 4; atypical zinc-finger fold; sequence YKCEFCGRSYKQRSSLEEHKERC. Lysine 245 is covalently cross-linked (Glycyl lysine isopeptide (Lys-Gly) (interchain with G-Cter in SUMO2)). Threonine 326 carries the post-translational modification Phosphothreonine. Residues 365–421 form a disordered region; it reads HLPEKSLPSERGLSPTNSGHDSTDTDSNHEERQNHIYQQNPMVPPRARNGMPLLKEG. A Phosphoserine modification is found at serine 378. Residues 385-398 show a composition bias toward basic and acidic residues; sequence DSTDTDSNHEERQN. Residues 452-474 form a C2H2-type 5 zinc finger; sequence YRCDHCRVLFLDYVMFTIHMGCH. Positions 452–504 are mediates homodimerization and heterodimerization; it reads YRCDHCRVLFLDYVMFTIHMGCHGFRDPFECNMCGYRSHDRYEFSSHIARGEH. The segment at 480–504 adopts a C2H2-type 6; atypical zinc-finger fold; that stretch reads FECNMCGYRSHDRYEFSSHIARGEH.

It belongs to the Ikaros C2H2-type zinc-finger protein family. In terms of assembly, homodimer. Heterodimer with other IKAROS family members. Interacts with IKZF4 and IKZF5. Interacts with IKZF1. Interacts with HRAS. Interacts with FOXP3; this interaction may be required for silencing target genes and regulating the suppressive activity of FOXP3-positive regulatory T-cells (Treg). Interacts with BCL21L; this interaction blocks the anti-apoptotic role of BCL21L. Associates with histone deacetylase complexes containing HDAC1, MTA2 and SIN3A.

It localises to the nucleus. Its subcellular location is the cytoplasm. Transcription factor that plays an important role in the regulation of lymphocyte differentiation. Plays an essential role in regulation of B-cell differentiation, proliferation and maturation to an effector state. Involved in regulating BCL2 expression and controlling apoptosis in T-cells in an IL2-dependent manner. The sequence is that of Zinc finger protein Aiolos (IKZF3) from Bos taurus (Bovine).